We begin with the raw amino-acid sequence, 6077 residues long: Nonribosomal peptide synthetase nlsA (6077 aa).

An adenylation 1 region spans residues 417 to 618 (VFAYAPLIHG…LGRKDSQIKL (202 aa)). The Carrier 1 domain occupies 751 to 827 (HSEVTVEDRL…DLVTRVQEIK (77 aa)). S788 carries the post-translational modification O-(pantetheine 4'-phosphoryl)serine. Condensation regions lie at residues 842-1267 (LSPI…GKRL) and 1309-1737 (EDIY…KQRI). Adenylation regions lie at residues 1757–2149 (QEKM…YLGE) and 2755–3157 (DRVI…QVKL). Positions 3297 to 3373 (AVERAAESTL…DMAKCCDDTE (77 aa)) constitute a Carrier 2 domain. S3334 carries the post-translational modification O-(pantetheine 4'-phosphoryl)serine. A condensation 3 region spans residues 3524–3779 (DSRYRQCLYK…LLSVPRDSLM (256 aa)). Residues 3816 to 4213 (ENAIMHPQAT…LGRKDHQVKL (398 aa)) are adenylation 4. One can recognise a Carrier 3 domain in the interval 4361-4437 (REGDATPAII…ELAVSCGTKP (77 aa)). O-(pantetheine 4'-phosphoryl)serine is present on S4398. 2 condensation regions span residues 4451-4869 (PLSP…RVLE) and 4916-5260 (VEDI…EDKT). The Carrier 4 domain maps to 5334-5410 (RAPNDSEKQL…NMMALINDRK (77 aa)). Position 5371 is an O-(pantetheine 4'-phosphoryl)serine (S5371). Residues 5476-5885 (DVLPVTDFQA…SLVANPNVAL (410 aa)) form a condensation 6 region. In terms of domain architecture, Carrier 5 spans 5921–6004 (SEILVHSDLI…GHMAVLALNM (84 aa)). A compositionally biased stretch (low complexity) spans 6013–6027 (DSDAAPAPAYAPVDA). Residues 6013–6047 (DSDAAPAPAYAPVDARASRNVSTSRQQQEGLPLPA) are disordered. Over residues 6031 to 6041 (RNVSTSRQQQE) the composition is skewed to polar residues.

The protein belongs to the NRP synthetase family.

Its pathway is secondary metabolite biosynthesis. Functionally, nonribosomal peptide synthetase involved in the synthesis of nidulanin A and derived compounds. Nidulanin A is a tetracyclopeptide with the sequence L-Phe-L-Kyn-L-Val-D-Val and an isoprene unit N-linked to the amino group of L-kynurenine. The NRPS nlsA is responsible of the synthesis of the cyclopeptide and the prenyltransferase nptA adds the isoprene unit on the L-kynurenine residue of nidulanin A. Further modifications lead to additional oxygenated related compounds. This chain is Nonribosomal peptide synthetase nlsA, found in Emericella nidulans (strain FGSC A4 / ATCC 38163 / CBS 112.46 / NRRL 194 / M139) (Aspergillus nidulans).